The following is a 129-amino-acid chain: Ribosome-binding factor A (129 aa).

Belongs to the RbfA family. Monomer. Binds 30S ribosomal subunits, but not 50S ribosomal subunits or 70S ribosomes.

Its subcellular location is the cytoplasm. One of several proteins that assist in the late maturation steps of the functional core of the 30S ribosomal subunit. Associates with free 30S ribosomal subunits (but not with 30S subunits that are part of 70S ribosomes or polysomes). Required for efficient processing of 16S rRNA. May interact with the 5'-terminal helix region of 16S rRNA. This chain is Ribosome-binding factor A, found in Thioalkalivibrio sulfidiphilus (strain HL-EbGR7).